The chain runs to 282 residues: Transcription factor MYB1 (282 aa).

2 HTH myb-type domains span residues 9–61 (KEGL…LNYL) and 62–116 (RPDI…SKKV). DNA-binding regions (H-T-H motif) lie at residues 37–61 (WRDL…LNYL) and 89–112 (WSLI…NTYL). The disordered stretch occupies residues 258–282 (EDDWKQNGGKDELMGGGNGGPSSVS). A compositionally biased stretch (basic and acidic residues) spans 260-270 (DWKQNGGKDEL). Gly residues predominate over residues 271 to 282 (MGGGNGGPSSVS).

The protein localises to the nucleus. Its function is as follows. Transcription activator involved in the spatiotemporal regulation of flavonoid biosynthesis specifically in the corms of Montbretia. Activates the promoters of enzymes involved in the biosynthesis of the flavonol kaempferol and the flavonol-glycoside kaempferol-rhamnoside. This is Transcription factor MYB1 from Crocosmia x crocosmiiflora (Montbretia).